The primary structure comprises 564 residues: Proline--tRNA ligase (564 aa).

This sequence belongs to the class-II aminoacyl-tRNA synthetase family. ProS type 1 subfamily. As to quaternary structure, homodimer.

It is found in the cytoplasm. The enzyme catalyses tRNA(Pro) + L-proline + ATP = L-prolyl-tRNA(Pro) + AMP + diphosphate. Catalyzes the attachment of proline to tRNA(Pro) in a two-step reaction: proline is first activated by ATP to form Pro-AMP and then transferred to the acceptor end of tRNA(Pro). As ProRS can inadvertently accommodate and process non-cognate amino acids such as alanine and cysteine, to avoid such errors it has two additional distinct editing activities against alanine. One activity is designated as 'pretransfer' editing and involves the tRNA(Pro)-independent hydrolysis of activated Ala-AMP. The other activity is designated 'posttransfer' editing and involves deacylation of mischarged Ala-tRNA(Pro). The misacylated Cys-tRNA(Pro) is not edited by ProRS. The sequence is that of Proline--tRNA ligase from Bacillus subtilis (strain 168).